The chain runs to 369 residues: 2-aminoethylphosphonate--pyruvate transaminase (369 aa).

An N6-(pyridoxal phosphate)lysine modification is found at Lys193.

Belongs to the class-V pyridoxal-phosphate-dependent aminotransferase family. PhnW subfamily. As to quaternary structure, homodimer. Requires pyridoxal 5'-phosphate as cofactor.

The enzyme catalyses (2-aminoethyl)phosphonate + pyruvate = phosphonoacetaldehyde + L-alanine. In terms of biological role, involved in phosphonate degradation. The chain is 2-aminoethylphosphonate--pyruvate transaminase from Burkholderia pseudomallei (strain K96243).